The sequence spans 354 residues: Uroporphyrinogen decarboxylase (354 aa).

Residues 27–31, Phe46, Asp77, Tyr154, Thr209, and His327 each bind substrate; that span reads RQAGR.

This sequence belongs to the uroporphyrinogen decarboxylase family. In terms of assembly, homodimer.

It localises to the cytoplasm. It carries out the reaction uroporphyrinogen III + 4 H(+) = coproporphyrinogen III + 4 CO2. It functions in the pathway porphyrin-containing compound metabolism; protoporphyrin-IX biosynthesis; coproporphyrinogen-III from 5-aminolevulinate: step 4/4. Its function is as follows. Catalyzes the decarboxylation of four acetate groups of uroporphyrinogen-III to yield coproporphyrinogen-III. This Pseudomonas putida (strain ATCC 47054 / DSM 6125 / CFBP 8728 / NCIMB 11950 / KT2440) protein is Uroporphyrinogen decarboxylase.